Consider the following 461-residue polypeptide: Bifunctional protein HldE (461 aa).

Positions 1-312 (MLEFLSQQKP…IKSFNRVDFE (312 aa)) are ribokinase. ATP is bound at residue 191–194 (NKKE). Asp-259 is a catalytic residue. The tract at residues 334–461 (FTNGCFDIVH…KIIEKIKDKK (128 aa)) is cytidylyltransferase.

This sequence in the N-terminal section; belongs to the carbohydrate kinase PfkB family. In the C-terminal section; belongs to the cytidylyltransferase family. In terms of assembly, homodimer.

It carries out the reaction D-glycero-beta-D-manno-heptose 7-phosphate + ATP = D-glycero-beta-D-manno-heptose 1,7-bisphosphate + ADP + H(+). The enzyme catalyses D-glycero-beta-D-manno-heptose 1-phosphate + ATP + H(+) = ADP-D-glycero-beta-D-manno-heptose + diphosphate. It functions in the pathway nucleotide-sugar biosynthesis; ADP-L-glycero-beta-D-manno-heptose biosynthesis; ADP-L-glycero-beta-D-manno-heptose from D-glycero-beta-D-manno-heptose 7-phosphate: step 1/4. The protein operates within nucleotide-sugar biosynthesis; ADP-L-glycero-beta-D-manno-heptose biosynthesis; ADP-L-glycero-beta-D-manno-heptose from D-glycero-beta-D-manno-heptose 7-phosphate: step 3/4. Its function is as follows. Catalyzes the phosphorylation of D-glycero-D-manno-heptose 7-phosphate at the C-1 position to selectively form D-glycero-beta-D-manno-heptose-1,7-bisphosphate. Catalyzes the ADP transfer from ATP to D-glycero-beta-D-manno-heptose 1-phosphate, yielding ADP-D-glycero-beta-D-manno-heptose. The sequence is that of Bifunctional protein HldE from Campylobacter jejuni subsp. doylei (strain ATCC BAA-1458 / RM4099 / 269.97).